An 86-amino-acid polypeptide reads, in one-letter code: Insulin-related peptide 2 (86 aa).

The N-terminal stretch at 1–19 is a signal peptide; it reads MKFYIVFALILACAACVSS. Residues 20–43 constitute a propeptide that is removed on maturation; it reads QEGTNFYCGRQLSRTLALVCWGAE. At Arg63 the chain carries Arginine amide. Residues 67–86 constitute a propeptide that is removed on maturation; the sequence is GPVDECCLKPCSIEEMLTYC.

Belongs to the insulin family. In terms of tissue distribution, DAGWWVPPQSARALGGGR-amide: Expressed in corpora cardiaca (CC), corpora allata (CA), antennal lobe (AL) and gnathal ganglion (GNG) (at protein level). Expression in CC and CA detected in most animals, in AL in some animals and in GNG in few animals (at protein level).

The protein localises to the secreted. In Agrotis ipsilon (Black cutworm moth), this protein is Insulin-related peptide 2.